A 357-amino-acid chain; its full sequence is Hyaluronidase (357 aa).

The first 26 residues, 1–26 (MLLVTLFLFFLQALVNGDSCGSNCEK), serve as a signal peptide directing secretion. 2 cysteine pairs are disulfide-bonded: Cys-45–Cys-334 and Cys-211–Cys-223. Residues Asn-105 and Asn-125 are each glycosylated (N-linked (GlcNAc...) asparagine). Glu-135 (proton donor) is an active-site residue. Asn-153 carries an N-linked (GlcNAc...) asparagine glycan. Asn-351 carries an N-linked (GlcNAc...) asparagine glycan.

The protein belongs to the glycosyl hydrolase 56 family.

It localises to the secreted. It carries out the reaction Random hydrolysis of (1-&gt;4)-linkages between N-acetyl-beta-D-glucosamine and D-glucuronate residues in hyaluronate.. Its function is as follows. Hydrolyzes high molecular weight hyaluronic acid to produce small oligosaccharides. The protein is Hyaluronidase of Vespa magnifica (Hornet).